Reading from the N-terminus, the 138-residue chain is uncharacterized protein (138 aa).

The interval 84 to 104 (PPKKTSPATSSSLKPRPGPRG) is disordered. Positions 85–98 (PKKTSPATSSSLKP) are enriched in low complexity.

To M.pneumoniae MPN_413 and MPN_463.

This is an uncharacterized protein from Mycoplasma pneumoniae (strain ATCC 29342 / M129 / Subtype 1) (Mycoplasmoides pneumoniae).